We begin with the raw amino-acid sequence, 163 residues long: Homoaconitase small subunit (163 aa).

The protein belongs to the LeuD family. As to quaternary structure, heterodimer of HacA and HacB.

It carries out the reaction (2R,3S)-homoisocitrate = cis-homoaconitate + H2O. The protein operates within amino-acid biosynthesis; L-lysine biosynthesis via AAA pathway; L-alpha-aminoadipate from 2-oxoglutarate: step 3/5. Its activity is regulated as follows. Is not inhibited by lysine. Functionally, catalyzes the reversible hydration of cis-homoaconitate ((Z)-but-1-ene-1,2,4-tricarboxylate) to homoisocitrate ((1R,2S)-1-hydroxybutane-1,2,4-tricarboxylate). Can catalyze neither the dehydration of (R)-homocitrate ((2R)-2-hydroxybutane-1,2,4-tricarboxylate) into cis-homoaconitate in vitro, nor the reverse reaction. Is not active toward (S)-homocitrate, cis-aconitate or citrate as substrate. In Thermus thermophilus (strain ATCC BAA-163 / DSM 7039 / HB27), this protein is Homoaconitase small subunit (hacB).